The following is a 348-amino-acid chain: Rhodopsin (348 aa).

Met1 carries the post-translational modification N-acetylmethionine. Residues 1–36 lie on the Extracellular side of the membrane; sequence MNGTEGPNFYVPFSNKTGVVRSPFEYPQYYLAEPWQ. 2 N-linked (GlcNAc...) asparagine glycosylation sites follow: Asn2 and Asn15. A helical membrane pass occupies residues 37–61; the sequence is FSMLAAYMFLLIVLGFPINFLTLYV. Residues 62–73 lie on the Cytoplasmic side of the membrane; sequence TVQHKKLRTPLN. A helical membrane pass occupies residues 74-96; sequence YILLNLAVADLFMVFGGFTTTLY. The Extracellular segment spans residues 97-110; that stretch reads TSLHGYFVFGPTGC. Residues Cys110 and Cys187 are joined by a disulfide bond. A helical membrane pass occupies residues 111 to 133; the sequence is NLEGFFATLGGEIALWSLVVLAI. The 'Ionic lock' involved in activated form stabilization motif lies at 134-136; the sequence is ERY. Residues 134–152 are Cytoplasmic-facing; that stretch reads ERYVVVCKPMSNFRFGENH. A helical membrane pass occupies residues 153–173; sequence AIMGVGLTWVMALACAAPPLV. At 174-202 the chain is on the extracellular side; the sequence is GWSRYIPEGMQCSCGIDYYTLKPEVNNES. Glu201 lines the Zn(2+) pocket. Residues 203 to 224 form a helical membrane-spanning segment; it reads FVIYMFVVHFTIPMIVIFFCYG. Residues 225–252 are Cytoplasmic-facing; it reads QLVFTVKEAAAQQQESATTQKAEKEVTR. Residues 253–274 form a helical membrane-spanning segment; that stretch reads MVIIMVIAFLICWVPYASVAFY. Residues 275-286 are Extracellular-facing; that stretch reads IFTHQGFNFGPI. A Zn(2+)-binding site is contributed by Gln279. A helical membrane pass occupies residues 287-308; that stretch reads FMTLPAFFAKAAAIYNPVIYIM. Lys296 carries the N6-(retinylidene)lysine modification. The Cytoplasmic portion of the chain corresponds to 309 to 348; it reads MNKQFRTCMITTLCCGKNPLGDDEVSASASKTETSQVAPA. S-palmitoyl cysteine attachment occurs at residues Cys322 and Cys323. Residues 330 to 348 are interaction with SAG; it reads DDEVSASASKTETSQVAPA. Residues Ser334 and Ser338 each carry the phosphoserine modification. 2 positions are modified to phosphothreonine: Thr340 and Thr342. Residue Ser343 is modified to Phosphoserine.

It belongs to the G-protein coupled receptor 1 family. Opsin subfamily. As to quaternary structure, homodimer. Interacts (phosphorylated form) with SAG. Interacts with GNAT1. Interacts with GNAT3. SAG and G-proteins compete for a common binding site. Interacts with GRK1. Interacts with PRCD; the interaction promotes PRCD stability. Forms a complex with ASAP1 and ARF4. Forms a complex with ASAP1, RAB11A, Rabin8/RAB3IP, ARF4 and RAB11FIP3; the complex regulates Golgi-to-cilia rhodopsin/RHO transport in photoreceptors. Post-translationally, phosphorylated on some or all of the serine and threonine residues present in the C-terminal region. In terms of processing, contains one covalently linked retinal chromophore. Upon light absorption, the covalently bound 11-cis-retinal is converted to all-trans-retinal. After hydrolysis of the Schiff base and release of the covalently bound all-trans-retinal, active rhodopsin is regenerated by binding of a fresh molecule of 11-cis-retinal.

Its subcellular location is the membrane. The protein localises to the cell projection. The protein resides in the cilium. It localises to the photoreceptor outer segment. In terms of biological role, photoreceptor required for image-forming vision at low light intensity. Required for photoreceptor cell viability after birth. Light-induced isomerization of 11-cis to all-trans retinal triggers a conformational change that activates signaling via G-proteins. Subsequent receptor phosphorylation mediates displacement of the bound G-protein alpha subunit by the arrestin SAG and terminates signaling. The chain is Rhodopsin (RHO) from Pagophilus groenlandicus (Harp seal).